A 913-amino-acid chain; its full sequence is Calcium-activated chloride channel regulator 1 (913 aa).

Positions 1–21 (MESLKSPVFLLILHLLEGVLS) are cleaved as a signal peptide. The interval 46–199 (DEALIQHIKD…AITGKNQVRR (154 aa)) is metalloprotease domain. H156 lines the Zn(2+) pocket. Residue E157 is part of the active site. Zn(2+) is bound by residues H160 and N167. The region spanning 307 to 476 (IVCLVLDKSG…NGLVDAFAAL (170 aa)) is the VWFA domain. N-linked (GlcNAc...) asparagine glycosylation is found at N504, N770, N804, N810, N836, and N887.

Belongs to the CLCR family. Post-translationally, the 110 kDa translation product is autoproteolytically cleaved by the metalloprotease domain in the endoplasmic reticulum into a 75 kDa N-terminal and a 35 kDa C-terminal products that remain physically associated with each other. The cleavage is necessary for calcium-activated chloride channel (CaCC) activation activity. In terms of processing, glycosylated. Exclusively expressed in the digestive and respiratory tracts and in the uterus (at protein level). Expressed in small intestine, colon, stomach, and uterus and slightly expressed in trachea tissue. Exclusively expressed in the mucin granule membranes of gastrointestinal, respiratory, and uterine goblet cells and other mucin-producing cells. In the colon, expressed in the surface mucous cells. In the stomach highly expressed in the surface epithelium in the pylorus. Strongly expressed in the airway epithelium of lung tissues associated with airway hyperresponsiveness (AHR).

It is found in the secreted. The protein localises to the extracellular space. May be involved in mediating calcium-activated chloride conductance. May play critical roles in goblet cell metaplasia, mucus hypersecretion, cystic fibrosis and AHR. May be involved in the regulation of mucus production and/or secretion by goblet cells. Involved in the regulation of tissue inflammation in the innate immune response. May play a role as a tumor suppressor. Induces MUC5AC. This chain is Calcium-activated chloride channel regulator 1 (Clca1), found in Mus musculus (Mouse).